Here is a 365-residue protein sequence, read N- to C-terminus: tRNA N6-adenosine threonylcarbamoyltransferase (365 aa).

Residues H119 and H123 each coordinate Fe cation. Substrate is bound by residues 141-145, D174, G187, and N289; that span reads LVSGG. D317 serves as a coordination point for Fe cation. Residues 342–365 form a disordered region; that stretch reads ARPRWPLDSKSPAMLGSGKKGAKA.

Belongs to the KAE1 / TsaD family. Requires Fe(2+) as cofactor.

Its subcellular location is the cytoplasm. It carries out the reaction L-threonylcarbamoyladenylate + adenosine(37) in tRNA = N(6)-L-threonylcarbamoyladenosine(37) in tRNA + AMP + H(+). Its function is as follows. Required for the formation of a threonylcarbamoyl group on adenosine at position 37 (t(6)A37) in tRNAs that read codons beginning with adenine. Is involved in the transfer of the threonylcarbamoyl moiety of threonylcarbamoyl-AMP (TC-AMP) to the N6 group of A37, together with TsaE and TsaB. TsaD likely plays a direct catalytic role in this reaction. The polypeptide is tRNA N6-adenosine threonylcarbamoyltransferase (Roseobacter denitrificans (strain ATCC 33942 / OCh 114) (Erythrobacter sp. (strain OCh 114))).